A 473-amino-acid chain; its full sequence is Probable glucose-6-phosphate 1-dehydrogenase C7.13c (473 aa).

Positions 43, 121, and 144 each coordinate NADP(+). Residues K144, H174–K178, E213, and D232 contribute to the D-glucose 6-phosphate site. H237 (proton acceptor) is an active-site residue. K331 contacts D-glucose 6-phosphate. NADP(+) is bound at residue K341. Q366 contacts D-glucose 6-phosphate.

The protein belongs to the glucose-6-phosphate dehydrogenase family.

It is found in the cytoplasm. It carries out the reaction D-glucose 6-phosphate + NADP(+) = 6-phospho-D-glucono-1,5-lactone + NADPH + H(+). It functions in the pathway carbohydrate degradation; pentose phosphate pathway; D-ribulose 5-phosphate from D-glucose 6-phosphate (oxidative stage): step 1/3. Catalyzes the rate-limiting step of the oxidative pentose-phosphate pathway, which represents a route for the dissimilation of carbohydrates besides glycolysis. The main function of this enzyme is to provide reducing power (NADPH) and pentose phosphates for fatty acid and nucleic acid synthesis. The protein is Probable glucose-6-phosphate 1-dehydrogenase C7.13c of Schizosaccharomyces pombe (strain 972 / ATCC 24843) (Fission yeast).